A 710-amino-acid polypeptide reads, in one-letter code: Integrator complex subunit 10 (710 aa).

The interval isoleucine 366–serine 393 is disordered. The span at leucine 372–serine 381 shows a compositional bias: basic and acidic residues.

It belongs to the Integrator subunit 10 family. In terms of assembly, component of the Integrator complex, composed of core subunits INTS1, INTS2, INTS3, INTS4, INTS5, INTS6, INTS7, INTS8, INTS9/RC74, INTS10, INTS11/CPSF3L, INTS12, INTS13, INTS14 and INTS15. The core complex associates with protein phosphatase 2A subunits PPP2CA and PPP2R1A, to form the Integrator-PP2A (INTAC) complex. INTS10 is part of the tail subcomplex, composed of INTS10, INTS13, INTS14 and INTS15.

Its subcellular location is the nucleus. In terms of biological role, component of the integrator complex, a multiprotein complex that terminates RNA polymerase II (Pol II) transcription in the promoter-proximal region of genes. The integrator complex provides a quality checkpoint during transcription elongation by driving premature transcription termination of transcripts that are unfavorably configured for transcriptional elongation: the complex terminates transcription by (1) catalyzing dephosphorylation of the C-terminal domain (CTD) of Pol II subunit POLR2A/RPB1 and SUPT5H/SPT5, (2) degrading the exiting nascent RNA transcript via endonuclease activity and (3) promoting the release of Pol II from bound DNA. The integrator complex is also involved in terminating the synthesis of non-coding Pol II transcripts, such as enhancer RNAs (eRNAs), small nuclear RNAs (snRNAs), telomerase RNAs and long non-coding RNAs (lncRNAs). The protein is Integrator complex subunit 10 (INTS10) of Gallus gallus (Chicken).